Consider the following 356-residue polypeptide: Phosphoribosylformylglycinamidine cyclo-ligase (356 aa).

It belongs to the AIR synthase family.

The protein resides in the cytoplasm. It catalyses the reaction 2-formamido-N(1)-(5-O-phospho-beta-D-ribosyl)acetamidine + ATP = 5-amino-1-(5-phospho-beta-D-ribosyl)imidazole + ADP + phosphate + H(+). Its pathway is purine metabolism; IMP biosynthesis via de novo pathway; 5-amino-1-(5-phospho-D-ribosyl)imidazole from N(2)-formyl-N(1)-(5-phospho-D-ribosyl)glycinamide: step 2/2. The sequence is that of Phosphoribosylformylglycinamidine cyclo-ligase from Sinorhizobium medicae (strain WSM419) (Ensifer medicae).